A 213-amino-acid polypeptide reads, in one-letter code: Ras-related protein Rab-2 (213 aa).

14 residues coordinate GTP: Thr15, Gly16, Gly18, Lys19, Ser20, Cys21, Gln32, Pro33, His35, Thr38, Gly64, Asn119, Asp122, and Ala150. Position 20 (Ser20) interacts with Mg(2+). Thr38 lines the Mg(2+) pocket. The disordered stretch occupies residues 190-213 (QHSPTNPSLPGAGGAAGAANSGCC). Residues Cys212 and Cys213 are each lipidated (S-geranylgeranyl cysteine).

It belongs to the small GTPase superfamily. Rab family. Interacts (GTP-bound form) with Vps16A and Vps39; the interaction with Vps39 is probably direct.

The protein localises to the vesicle. Its subcellular location is the cytoplasmic vesicle. It localises to the cell projection. It is found in the axon. The protein resides in the presynapse. The protein localises to the presynaptic active zone. Its subcellular location is the golgi apparatus. It localises to the trans-Golgi network. It is found in the perikaryon. The protein resides in the autophagosome membrane. The protein localises to the autolysosome membrane. It catalyses the reaction GTP + H2O = GDP + phosphate + H(+). Functionally, may be involved in bidirectional endoplasmic reticulum (ER) to Golgi trafficking. Together with Rab7 involved in promoting fusion of autophagosomes and endosomes with lysosomes, probably through recruitment of the HOPS tethering complex. Involved in biosynthetic transport to lysosomes. In larval motor neurons, mediates the biogenesis of presynaptic cargo vesicles and their long-range axonal trafficking to synaptic termini. Not involved in axonal trafficking of mitochondria. During vesicle biogenesis, active zone proteins (including brp/Bruchpilot) and synaptic vesicle proteins (including VGlut) are sorted from the trans-Golgi in a Rab2-dependent manner via, at least, two independent routes. Acts upstream of Arl8 during presynaptic precursor vesicle biogenesis. Associated with lysosomal marker positive presynaptic cargo vesicles during anterograde and retrograde axonal trafficking, probably while in its GTP-bound active state. Involved in the delivery of presynaptic cargos, but not presynapse assembly or active zone function at synaptic termini. Required for autophagocytosis-dependent remodeling of myofibrils and transverse-tubules (T-tubules) during metamorphosis. The sequence is that of Ras-related protein Rab-2 from Drosophila melanogaster (Fruit fly).